Here is a 20-residue protein sequence, read N- to C-terminus: 39 kDa major outer membrane protein (20 aa).

It localises to the cell outer membrane. The polypeptide is 39 kDa major outer membrane protein (Aggregatibacter actinomycetemcomitans (Actinobacillus actinomycetemcomitans)).